Consider the following 2365-residue polypeptide: Voltage-dependent T-type calcium channel subunit alpha-1H (2365 aa).

A disordered region spans residues 1-63 (MTEGTLAADE…PGTECGADLG (63 aa)). The Cytoplasmic segment spans residues 1–100 (MTEGTLAADE…SWCLRLVSRR (100 aa)). The segment covering 16–36 (GASPSAPAAPVRASPASPGVP) has biased composition (low complexity). One copy of the I repeat lies at 87–422 (TRPRSWCLRL…LCLVVIATQF (336 aa)). A helical transmembrane segment spans residues 101-119 (WFEHISMLVIMLNCVTLGM). At 120 to 141 (FRPCEDVECRSERCSILEAFDD) the chain is on the extracellular side. A Zn(2+)-binding site is contributed by Asp-140. Residues 142–160 (FIFAFFAVEMVIKMVALGL) form a helical membrane-spanning segment. The Cytoplasmic portion of the chain corresponds to 161-169 (FGQKCYLGD). Residues 170 to 184 (TWNRLDFFIVMAGMM) form a helical membrane-spanning segment. Residues 185–193 (EYSLDGHNV) are Extracellular-facing. Zn(2+)-binding residues include Asp-189 and His-191. Asn-192 is a glycosylation site (N-linked (GlcNAc...) asparagine). Residues 194–212 (SLSAIRTVRVLRPLRAINR) traverse the membrane as a helical segment. The Cytoplasmic segment spans residues 213-232 (VPSMRILVTLLLDTLPMLGN). A helical transmembrane segment spans residues 233 to 253 (VLLLCFFVFFIFGIVGVQLWA). Residues 254-394 (GLLRNRCFLD…YYVMDAHSFY (141 aa)) are Extracellular-facing. Residue Asn-271 is glycosylated (N-linked (GlcNAc...) asparagine). The helical transmembrane segment at 395-419 (NFIYFILLIIVGSFFMINLCLVVIA) threads the bilayer. The Cytoplasmic segment spans residues 420 to 790 (TQFSETKQRE…SKLRRIVDSK (371 aa)). Disordered regions lie at residues 490 to 573 (VDPS…SESV), 618 to 656 (PSGA…SPSP), and 737 to 761 (GDCR…RWRP). Basic residues predominate over residues 500 to 532 (GPRRRPRRAGRRTASVHHLVYHHHHHHHHHYHF). Positions 557 to 566 (PPSPPSPGHG) are enriched in pro residues. Polar residues predominate over residues 621 to 631 (AVNSKGSTSSR). One copy of the II repeat lies at 776–1015 (WASFSSKLRR…LLVAILVEGF (240 aa)). The helical transmembrane segment at 791-811 (YFNRGIMAAILVNTLSMGVEY) threads the bilayer. The Extracellular portion of the chain corresponds to 812–824 (HEQPDELTNALEI). A helical membrane pass occupies residues 825–846 (SNIVFTSMFALEMLLKLLACGP). The Cytoplasmic segment spans residues 847–852 (LGYIRN). A helical transmembrane segment spans residues 853-871 (PYNIFDGIVVIISVWEIVG). Residues 872 to 879 (QADGGLSV) lie on the Extracellular side of the membrane. Residues 880–903 (LRTFRLLRVLKLVRFLPALRRQLV) form a helical membrane-spanning segment. Over 904–914 (VLMRTMDNVAT) the chain is Cytoplasmic. Residues 915–935 (FCMLLMLFIFIFSILGMHLFG) form a helical membrane-spanning segment. Over 936 to 987 (CKFSLKTDSGDTVPDRKNFDSLLWAIVTVFQILTQEDWNVVLYNGMASTSSW) the chain is Extracellular. A helical transmembrane segment spans residues 988–1012 (AALYFVALMTFGNYVLFNLLVAILV). The Cytoplasmic portion of the chain corresponds to 1013–1301 (EGFQAEGDAT…NRLRVSCQKV (289 aa)). Residues 1059-1215 (PNGHLEGRGS…HRSTMDLCPP (157 aa)) are disordered. Over residues 1130 to 1147 (GPNSAGSSRRSSWNSLGR) the composition is skewed to low complexity. Over residues 1199–1209 (RRAESLGHRST) the composition is skewed to basic and acidic residues. One copy of the III repeat lies at 1292 to 1569 (NRLRVSCQKV…MFVGVVVENF (278 aa)). A helical membrane pass occupies residues 1302 to 1324 (IAHKMFDHVVLVFIFLNCITIAL). The Extracellular portion of the chain corresponds to 1325-1342 (ERPDIDPGSTERAFLSVS). Residues 1343-1363 (NYIFTAIFVVEMMVKVVALGL) form a helical membrane-spanning segment. The Cytoplasmic portion of the chain corresponds to 1364 to 1373 (LWGEHAYLQS). Residues 1374 to 1393 (SWNVLDGLLVLVSLVDIIVA) form a helical membrane-spanning segment. The Extracellular portion of the chain corresponds to 1394-1407 (VASAGGAKILGVLR). A helical membrane pass occupies residues 1408–1429 (VLRLLRTLRPLRVISRAPGLKL). The Cytoplasmic segment spans residues 1430–1439 (VVETLISSLR). A helical transmembrane segment spans residues 1440–1463 (PIGNIVLICCAFFIIFGILGVQLF). The Extracellular segment spans residues 1464-1540 (KGKFYYCEGT…DQQPVQNHNP (77 aa)). An N-linked (GlcNAc...) asparagine glycan is attached at Asn-1477. Residues 1541–1566 (WMLLYFISFLLIVSFFVLNMFVGVVV) traverse the membrane as a helical segment. At 1567–1627 (ENFHKCRQHQ…RRSIHSLCTS (61 aa)) the chain is on the cytoplasmic side. The IV repeat unit spans residues 1613–1874 (DYSHTRRSIH…VVVAVLMKHL (262 aa)). A helical transmembrane segment spans residues 1628-1648 (HYLDLFITFIICLNVITMSME). Over 1649 to 1662 (HYNQPKSLDEALKY) the chain is Extracellular. Residues 1663-1684 (CNYVFTIVFVFEAALKLVAFGF) traverse the membrane as a helical segment. At 1685–1691 (RRFFKDR) the chain is on the cytoplasmic side. A helical membrane pass occupies residues 1692-1710 (WNQLDLAIVLLSIMGIALE). Residues 1711–1724 (EIEMNAALPINPTI) lie on the Extracellular side of the membrane. A helical transmembrane segment spans residues 1725 to 1748 (IRIMRVLRIARVLKLLKMATGMRA). Topologically, residues 1749 to 1762 (LLDTVVQALPQVGN) are cytoplasmic. The chain crosses the membrane as a helical span at residues 1763–1783 (LGLLFMLLFFIYAALGVELFG). Residues 1784–1846 (RLECSEDNPC…KHCLSYLPAL (63 aa)) lie on the Extracellular side of the membrane. A helical transmembrane segment spans residues 1847 to 1874 (SPVYFVTFVLVAQFVLVNVVVAVLMKHL). The Cytoplasmic portion of the chain corresponds to 1875-2365 (EESNKEARED…APDDSGDEPV (491 aa)). 2 stretches are compositionally biased toward polar residues: residues 1897-1916 (QGST…TEPD) and 1967-1983 (VTSA…SFQV). 4 disordered regions span residues 1897-1920 (QGST…TPNL), 1967-1999 (VTSA…PLCA), 2053-2264 (APLG…GERW), and 2321-2365 (ELSM…DEPV). The span at 2092–2102 (DDAEAADPADE) shows a compositional bias: acidic residues. The segment covering 2172–2187 (GDGHLESGEVRARASE) has biased composition (basic and acidic residues).

This sequence belongs to the calcium channel alpha-1 subunit (TC 1.A.1.11) family. CACNA1H subfamily. Interacts (via N-terminal cytoplasmic domain) with STAC. In response to raising of intracellular calcium, the T-type channels are activated by CaM-kinase II. As to expression, is highly expressed in lumbosacral and thoracolumbar dorsal root ganglion neurons.

Its subcellular location is the cell membrane. It carries out the reaction Ca(2+)(in) = Ca(2+)(out). Its function is as follows. Voltage-sensitive calcium channel that gives rise to T-type calcium currents. T-type calcium channels belong to the 'low-voltage activated (LVA)' group. A particularity of this type of channel is an opening at quite negative potentials, and a voltage-dependent inactivation. T-type channels serve pacemaking functions in both central neurons and cardiac nodal cells and support calcium signaling in secretory cells and vascular smooth muscle. They may also be involved in the modulation of firing patterns of neurons. In the adrenal zona glomerulosa, participates in the signaling pathway leading to aldosterone production in response to either AGT/angiotensin II, or hyperkalemia. The chain is Voltage-dependent T-type calcium channel subunit alpha-1H (Cacna1h) from Mus musculus (Mouse).